The following is a 102-amino-acid chain: U7-agatoxin-Ao1a (102 aa).

An N-terminal signal peptide occupies residues 1–19 (MTQAFFFLLLVSLVASTLS). Positions 20 to 39 (KEFNFCPRAIDEVCPVKEKR) are excised as a propeptide. Tryptophan amide is present on tryptophan 101.

The protein belongs to the venom protein 11 family. 02 (wap-2) subfamily. Post-translationally, contains 5 disulfide bonds. In terms of tissue distribution, expressed by the venom gland.

The protein localises to the secreted. The protein is U7-agatoxin-Ao1a of Agelena orientalis (Funnel-web spider).